The sequence spans 291 residues: Gamma-sarcoglycan (291 aa).

A helical; Signal-anchor for type II membrane protein transmembrane segment spans residues 38–58 (LFVLLLLIILLVNFALTIWIL). The Extracellular portion of the chain corresponds to 59-291 (KVMWFSPTGM…TCHEHSHICL (233 aa)). Asn110 carries N-linked (GlcNAc...) asparagine glycosylation. Disulfide bonds link Cys265–Cys290 and Cys267–Cys283.

Belongs to the sarcoglycan beta/delta/gamma/zeta family. As to quaternary structure, interacts with the syntrophin SNTA1. Cross-link to form 2 major subcomplexes: one consisting of SGCB, SGCD and SGCG and the other consisting of SGCB and SGCD. The association between SGCB and SGCG is particularly strong while SGCA is loosely associated with the other sarcoglycans. Interacts with FLNC. Post-translationally, disulfide bonds are present.

It localises to the cell membrane. The protein resides in the sarcolemma. Its subcellular location is the cytoplasm. It is found in the cytoskeleton. In terms of biological role, component of the sarcoglycan complex, a subcomplex of the dystrophin-glycoprotein complex which forms a link between the F-actin cytoskeleton and the extracellular matrix. The sequence is that of Gamma-sarcoglycan (SGCG) from Canis lupus familiaris (Dog).